Consider the following 523-residue polypeptide: 2-isopropylmalate synthase (523 aa).

The Pyruvate carboxyltransferase domain maps to 5 to 267 (VIIFDTTLRD…HTRINHQEIW (263 aa)). The Mn(2+) site is built by D14, H202, H204, and N238. A regulatory domain region spans residues 392-523 (RLDYFSVQSG…QNKENNKETV (132 aa)).

The protein belongs to the alpha-IPM synthase/homocitrate synthase family. LeuA type 1 subfamily. In terms of assembly, homodimer. The cofactor is Mn(2+).

It is found in the cytoplasm. The catalysed reaction is 3-methyl-2-oxobutanoate + acetyl-CoA + H2O = (2S)-2-isopropylmalate + CoA + H(+). It participates in amino-acid biosynthesis; L-leucine biosynthesis; L-leucine from 3-methyl-2-oxobutanoate: step 1/4. Catalyzes the condensation of the acetyl group of acetyl-CoA with 3-methyl-2-oxobutanoate (2-ketoisovalerate) to form 3-carboxy-3-hydroxy-4-methylpentanoate (2-isopropylmalate). The polypeptide is 2-isopropylmalate synthase (Citrobacter koseri (strain ATCC BAA-895 / CDC 4225-83 / SGSC4696)).